Here is a 397-residue protein sequence, read N- to C-terminus: Proteasome-activating nucleotidase (397 aa).

Residues 12 to 58 are a coiled coil; sequence GYEDYITFLKRRIRQLELQVRTLEADKERLERELSRLRTEMSRLRQP. ATP is bound by residues 182–187 and histidine 321; that span reads GCGKTL. The interval 395 to 397 is docks into pockets in the proteasome alpha-ring to cause gate opening; sequence MYG.

Belongs to the AAA ATPase family. Homohexamer. The hexameric complex has a two-ring architecture resembling a top hat that caps the 20S proteasome core at one or both ends. Upon ATP-binding, the C-terminus of PAN interacts with the alpha-rings of the proteasome core by binding to the intersubunit pockets.

It localises to the cytoplasm. Functionally, ATPase which is responsible for recognizing, binding, unfolding and translocation of substrate proteins into the archaeal 20S proteasome core particle. Is essential for opening the gate of the 20S proteasome via an interaction with its C-terminus, thereby allowing substrate entry and access to the site of proteolysis. Thus, the C-termini of the proteasomal ATPase function like a 'key in a lock' to induce gate opening and therefore regulate proteolysis. Unfolding activity requires energy from ATP hydrolysis, whereas ATP binding alone promotes ATPase-20S proteasome association which triggers gate opening, and supports translocation of unfolded substrates. This is Proteasome-activating nucleotidase from Thermococcus gammatolerans (strain DSM 15229 / JCM 11827 / EJ3).